Reading from the N-terminus, the 160-residue chain is 6,7-dimethyl-8-ribityllumazine synthase (160 aa).

Residues F32, A66–E68, and C90–I92 each bind 5-amino-6-(D-ribitylamino)uracil. Residue E95–T96 coordinates (2S)-2-hydroxy-3-oxobutyl phosphate. H98 functions as the Proton donor in the catalytic mechanism. N123 serves as a coordination point for 5-amino-6-(D-ribitylamino)uracil. R137 is a binding site for (2S)-2-hydroxy-3-oxobutyl phosphate.

It belongs to the DMRL synthase family.

The enzyme catalyses (2S)-2-hydroxy-3-oxobutyl phosphate + 5-amino-6-(D-ribitylamino)uracil = 6,7-dimethyl-8-(1-D-ribityl)lumazine + phosphate + 2 H2O + H(+). It participates in cofactor biosynthesis; riboflavin biosynthesis; riboflavin from 2-hydroxy-3-oxobutyl phosphate and 5-amino-6-(D-ribitylamino)uracil: step 1/2. In terms of biological role, catalyzes the formation of 6,7-dimethyl-8-ribityllumazine by condensation of 5-amino-6-(D-ribitylamino)uracil with 3,4-dihydroxy-2-butanone 4-phosphate. This is the penultimate step in the biosynthesis of riboflavin. This Methylibium petroleiphilum (strain ATCC BAA-1232 / LMG 22953 / PM1) protein is 6,7-dimethyl-8-ribityllumazine synthase.